A 1304-amino-acid polypeptide reads, in one-letter code: Splicing factor 3B subunit 1 (1304 aa).

Disordered regions lie at residues 100–119 (QYDPFAEHRPPKIADREDEY) and 124–148 (RTMIISPERLDPFADGGKTPDPKMN). The segment covering 104-119 (FAEHRPPKIADREDEY) has biased composition (basic and acidic residues). The residue at position 125 (threonine 125) is a Phosphothreonine. Phosphoserine is present on serine 129. Position 141 is an N6-acetyllysine (lysine 141). Residue threonine 142 is modified to Phosphothreonine. The residue at position 157 (arginine 157) is a Citrulline. A disordered region spans residues 173–360 (AEKAKAGELK…PVLTPGKTPI (188 aa)). A U2AF homology region; mediates interaction with RBM39 region spans residues 190 to 342 (SQPPSKRKRR…KRKSRWDETP (153 aa)). Serine 194 carries the phosphoserine modification. Phosphothreonine occurs at positions 203, 207, and 211. Residue lysine 214 is modified to N6-acetyllysine; alternate. Lysine 214 participates in a covalent cross-link: Glycyl lysine isopeptide (Lys-Gly) (interchain with G-Cter in SUMO2); alternate. Residues threonine 223 and threonine 227 each carry the phosphothreonine modification. The interval 223–491 (TPGHTPSLRW…VDESTLSPEE (269 aa)) is interaction with PPP1R8. Serine 229 is subject to Phosphoserine. Residues 231 to 241 (RWDETPGRAKG) are compositionally biased toward basic and acidic residues. Phosphothreonine is present on residues threonine 235, threonine 244, threonine 248, threonine 257, threonine 261, threonine 267, threonine 273, and threonine 278. Residue serine 287 is modified to Phosphoserine. Residues 291-304 (NRWDETPKTERDTP) show a composition bias toward basic and acidic residues. Phosphothreonine is present on residues threonine 296, threonine 299, threonine 303, and threonine 313. Serine 322 carries the post-translational modification Phosphoserine. A phosphothreonine mark is found at threonine 326 and threonine 328. Serine 332 is modified (phosphoserine). Phosphothreonine is present on threonine 341. Positions 342–352 (PASQMGGSTPV) are enriched in polar residues. A phosphoserine mark is found at serine 344 and serine 349. Phosphothreonine occurs at positions 350 and 354. The residue at position 400 (serine 400) is a Phosphoserine. Lysine 413 is covalently cross-linked (Glycyl lysine isopeptide (Lys-Gly) (interchain with G-Cter in SUMO2); alternate). A Glycyl lysine isopeptide (Lys-Gly) (interchain with G-Cter in SUMO1); alternate cross-link involves residue lysine 413. Threonine 426 carries the post-translational modification Phosphothreonine. A Glycyl lysine isopeptide (Lys-Gly) (interchain with G-Cter in SUMO2) cross-link involves residue lysine 430. Threonine 434 bears the Phosphothreonine; by DYRK1A mark. Threonine 436 carries the post-translational modification Phosphothreonine. At serine 488 the chain carries Phosphoserine. HEAT repeat units lie at residues 529–568 (GPLFNQILPLLMSPTLEDQERHLLVKVIDRILYKLDDLVR), 569–603 (PYVHKILVVIEPLLIDEDYYARVEGREIISNLAKA), 604–641 (AGLATMISTMRPDIDNMDEYVRNTTARAFAVVASALGI), 643–677 (SLLPFLKAVCKSKKSWQARHTGIKIVQQIAILMGC), 680–718 (LPHLRSLVEIIEHGLVDEQQKVRTISALAIAALAEAATP), 763–801 (NYYTREVMLILIREFQSPDEEMKKIVLKVVKQCCGTDGV), 843–881 (KVGAAEIISRIVDDLKDEAEQYRKMVMETIEKIMGNLGA), 1010–1048 (TPPIKDLLPRLTPILKNRHEKVQENCIDLVGRIADRGAE), 1052–1090 (AREWMRICFELLELLKAHKKAIRRATVNTFGYIAKAIGP), 1122–1160 (TCSPFTVLPALMNEYRVPELNVQNGVLKSLSFLFEYIGE), and 1163–1201 (KDYIYAVTPLLEDALMDRDLVHRQTASAVVQHMSLGVYG). Residues 529 to 568 (GPLFNQILPLLMSPTLEDQERHLLVKVIDRILYKLDDLVR) are interaction with SF3B14. Residues 547 to 550 (QERH) are interaction with PHF5A. 2 positions are modified to N6-acetyllysine: lysine 554 and lysine 562. An interaction with PHF5A region spans residues 1156-1157 (EY). An interaction with SF3B3 and SF3B5 region spans residues 1248–1304 (QYCLQGLFHPARKVRDVYWKIYNSIYIGSQDALIAHYPRIYNDDKNTYIRYELDYIL).

It belongs to the SF3B1 family. In terms of assembly, component of the 17S U2 SnRNP complex, a ribonucleoprotein complex that contains small nuclear RNA (snRNA) U2 and a number of specific proteins. Part of the SF3B subcomplex of the 17S U2 SnRNP complex. SF3B associates with the splicing subcomplex SF3A and a 12S RNA unit to form the U2 small nuclear ribonucleoproteins complex (U2 snRNP). Within the SF3B complex, interacts directly (via HEAT domain) with SF3B3, SF3B5, SF3B6 and (via HEAT domain) with PHF5A. The SF3B subcomplex interacts with U2AF2. Identified in the spliceosome C complex. Component of the minor (U12-type spliceosome) spliceosome. Within the minor spliceosome complex, interacts with SCNM1 and CRIPT. Component of the B-WICH complex, at least composed of SMARCA5/SNF2H, BAZ1B/WSTF, SF3B1, DEK, MYO1C, ERCC6, MYBBP1A and DDX21. Phosphorylated form interacts with PPP1R8. Interacts with PQBP1. Interacts with RBM17. Interacts with RBM39. Interacts with SETX. Interacts with RBM15. Interacts with USH1G. Interacts with SDE2. Interacts with U2AF1. Interacts with CACTIN. Interacts with ZRSR1. Interacts with CYREN. Phosphorylated. Phosphorylation occurs concomitantly with the splicing catalytic steps. Phosphorylation on Thr-244, Thr-248 and Thr-313 by cyclin-dependent kinases promotes interaction with PPP1R8 during mitosis. Post-translationally, citrullinated by PADI4.

The protein resides in the nucleus. The protein localises to the nucleus speckle. Component of the 17S U2 SnRNP complex of the spliceosome, a large ribonucleoprotein complex that removes introns from transcribed pre-mRNAs. The 17S U2 SnRNP complex (1) directly participates in early spliceosome assembly and (2) mediates recognition of the intron branch site during pre-mRNA splicing by promoting the selection of the pre-mRNA branch-site adenosine, the nucleophile for the first step of splicing. Within the 17S U2 SnRNP complex, SF3B1 is part of the SF3B subcomplex, which is required for 'A' complex assembly formed by the stable binding of U2 snRNP to the branchpoint sequence in pre-mRNA. Sequence independent binding of SF3A and SF3B subcomplexes upstream of the branch site is essential, it may anchor U2 snRNP to the pre-mRNA. May also be involved in the assembly of the 'E' complex. Also acts as a component of the minor spliceosome, which is involved in the splicing of U12-type introns in pre-mRNAs. Together with other U2 snRNP complex components may also play a role in the selective processing of microRNAs (miRNAs) from the long primary miRNA transcript, pri-miR-17-92. In Homo sapiens (Human), this protein is Splicing factor 3B subunit 1.